Reading from the N-terminus, the 198-residue chain is Patulin synthesis protein F (198 aa).

Residues Met-1 to Ala-18 form the signal peptide. 2 N-linked (GlcNAc...) asparagine glycosylation sites follow: Asn-128 and Asn-184.

The protein belongs to the patF family.

It localises to the cytoplasm. The protein resides in the cytosol. It carries out the reaction phyllostine = neopatulin. Its pathway is mycotoxin biosynthesis; patulin biosynthesis. In terms of biological role, part of the gene cluster that mediates the biosynthesis of patulin, an acetate-derived tetraketide mycotoxin produced by several fungal species that shows antimicrobial properties against several bacteria. PatF catalyzes the conversion of phyllostine into neopatulin. The pathway begins with the synthesis of 6-methylsalicylic acid by the polyketide synthase (PKS) patK via condensation of acetate and malonate units. The 6-methylsalicylic acid decarboxylase patG then catalyzes the decarboxylation of 6-methylsalicylic acid to yield m-cresol (also known as 3-methylphenol). These first reactions occur in the cytosol. The intermediate m-cresol is then transported into the endoplasmic reticulum where the cytochrome P450 monooxygenase patH converts it to m-hydroxybenzyl alcohol, which is further converted to gentisyl alcohol by the cytochrome P450 monooxygenase patI. The oxidoreductases patJ and patO further convert gentisyl alcohol to isoepoxydon in the vacuole. PatN catalyzes then the transformation of isoepoxydon into phyllostine. The cluster protein patF is responsible for the conversion from phyllostine to neopatulin whereas the alcohol dehydrogenase patD converts neopatulin to E-ascladiol. The steps between isoepoxydon and E-ascladiol occur in the cytosol, and E-ascladiol is probably secreted to the extracellular space by one of the cluster-specific transporters patC or patM. Finally, the secreted patulin synthase patE catalyzes the conversion of E-ascladiol to patulin. The protein is Patulin synthesis protein F of Aspergillus clavatus (strain ATCC 1007 / CBS 513.65 / DSM 816 / NCTC 3887 / NRRL 1 / QM 1276 / 107).